Consider the following 158-residue polypeptide: uncharacterized protein (158 aa).

The Nudix hydrolase domain occupies 3-130; that stretch reads YLQRVTNCVL…DGHILDFMMK (128 aa). A Nudix box motif is present at residues 34–55; sequence GKMESGESVRDSVIREYREETG. Mg(2+) contacts are provided by Glu49 and Glu53.

The protein belongs to the Nudix hydrolase family. The cofactor is Mg(2+).

This is an uncharacterized protein from Bacillus subtilis (strain 168).